Reading from the N-terminus, the 312-residue chain is Calcium-independent mitochondrial carrier protein SCaMC-3L (312 aa).

Solcar repeat units lie at residues 27–113 (GTLW…SKNF), 121–206 (QLFQ…LQCL), and 217–304 (PSGL…MKKT). Transmembrane regions (helical) follow at residues 33 to 50 (LLSG…TAPL), 88 to 107 (GNGI…FSVC), 131 to 144 (SLAV…INPM), 182 to 200 (YLPN…LAVY), 219 to 243 (GLVS…LTLV), and 279 to 298 (GMTP…YLVY).

Belongs to the mitochondrial carrier (TC 2.A.29) family. In terms of tissue distribution, mainly expressed in testis and at lesser levels in brain.

Its subcellular location is the mitochondrion inner membrane. The catalysed reaction is Mg(2+)(out) + phosphate(in) + ATP(out) = Mg(2+)(in) + phosphate(out) + ATP(in). It carries out the reaction ADP(out) + phosphate(in) + H(+)(out) = ADP(in) + phosphate(out) + H(+)(in). Calcium-independent ATP-Mg/Pi exchanger that catalyzes the electroneutral exchange of Mg-ATP or free ADP against an hydrogenphosphate and participates in the net transport of adenine nucleotides across the mitochondria inner membrane. In Mus musculus (Mouse), this protein is Calcium-independent mitochondrial carrier protein SCaMC-3L.